Here is a 252-residue protein sequence, read N- to C-terminus: Orotidine 5'-phosphate decarboxylase (252 aa).

Substrate is bound by residues Asp-24, Lys-46, 73-82 (DLKFHDIPNT), Thr-137, Arg-199, Gln-208, Gly-228, and Arg-229. Residue Lys-75 is the Proton donor of the active site.

The protein belongs to the OMP decarboxylase family. Type 1 subfamily. In terms of assembly, homodimer.

The catalysed reaction is orotidine 5'-phosphate + H(+) = UMP + CO2. Its pathway is pyrimidine metabolism; UMP biosynthesis via de novo pathway; UMP from orotate: step 2/2. Catalyzes the decarboxylation of orotidine 5'-monophosphate (OMP) to uridine 5'-monophosphate (UMP). The chain is Orotidine 5'-phosphate decarboxylase from Moorella thermoacetica (strain ATCC 39073 / JCM 9320).